Reading from the N-terminus, the 164-residue chain is uncharacterized protein (164 aa).

This is an uncharacterized protein from Mycobacterium tuberculosis (strain CDC 1551 / Oshkosh).